The following is a 992-amino-acid chain: Ribosome quality control complex subunit NEMF homolog (992 aa).

Residues 214–231 show a composition bias toward basic and acidic residues; the sequence is KETTEETPEAEDKPEKGG. The interval 214–245 is disordered; sequence KETTEETPEAEDKPEKGGKKQRKKQQNTKLEQ. Coiled-coil stretches lie at residues 331-370 and 481-514; these read STQE…LTKV and SAAQ…VRTI. 2 disordered regions span residues 688 to 715 and 771 to 895; these read EVEH…NTEI and GPSR…GDVD. Over residues 702 to 715 the composition is skewed to polar residues; that stretch reads SNINLSEPSSNTEI. A coiled-coil region spans residues 774-839; sequence RKKQVSAKKT…QDDEEREIRM (66 aa). Basic and acidic residues predominate over residues 782–796; sequence KTKEDKARAKQEAAK. Residues 814–825 show a composition bias toward basic residues; it reads RGQKGKLKKMKQ. Basic and acidic residues predominate over residues 845–874; sequence SGKEKPQASADKVVEKSESTKEYVKPEKSA.

The protein belongs to the NEMF family. As to quaternary structure, component of the ribosome quality control complex (RQC), composed of at least the E3 ubiquitin ligase l(3)76BDr/LTN1 and Clbn/NEMF associated with the 60S ribosomal subunit. The complex probably also contains TCF25 as well as TER94/VCP and its ubiquitin-binding cofactors. Interacts (via its C-terminus) with pros (via its homeobox). Interacts (via its N-terminus) with emb. Expressed in enterocytes (at protein level).

It localises to the nucleus. The protein resides in the cytoplasm. The protein localises to the mitochondrion outer membrane. Functionally, key component of the ribosome quality control complex (RQC), a ribosome-associated complex that mediates the extraction of incompletely synthesized nascent chains from stalled ribosomes as well as their ubiquitin-mediated proteasomal degradation. Thereby, frees 60S subunit ribosomes from the stalled translation complex and prevents the accumulation of nascent polypeptide chains that are potentially toxic for the cell. Within the RQC complex, Clbn/NEMF specifically binds stalled 60S ribosomal subunits by recognizing an exposed, nascent chain-conjugated tRNA moiety. Following binding to stalled 60S ribosomal subunits, Clbn/NEMF mediates CAT tailing by recruiting alanine-charged tRNA to the A-site and directing the elongation of stalled nascent chains independently of mRNA or 40S subunits, leading to non-templated C-terminal alanine extensions (CAT tails). On mitochondrial surface, plays a role in mitochondrial-stress induced translational termination impairment and protein carboxyl terminal extension (MISTERMINATE). Plays a role in regulating nuclear transport possibly through directly binding to both emb and cargo proteins. Plays a role in the regulation of G1-to-S cell cycle transition. Regulates S phase checkpoint by antagonizing E2F1 activity. Together with hid and tefu/ATM, plays a role in DNA damage-induced apoptosis through both p53-dependent and -independent activity. Plays an essential role in the regulation of mitochondrial structure and redox state in enterocytes which is essential for the control of intestinal stem cells proliferation and intestinal homeostasis. The chain is Ribosome quality control complex subunit NEMF homolog from Drosophila melanogaster (Fruit fly).